The following is a 262-amino-acid chain: GTP cyclohydrolase FolE2 (262 aa).

The protein belongs to the GTP cyclohydrolase IV family.

It carries out the reaction GTP + H2O = 7,8-dihydroneopterin 3'-triphosphate + formate + H(+). Its pathway is cofactor biosynthesis; 7,8-dihydroneopterin triphosphate biosynthesis; 7,8-dihydroneopterin triphosphate from GTP: step 1/1. Its function is as follows. Converts GTP to 7,8-dihydroneopterin triphosphate. This chain is GTP cyclohydrolase FolE2, found in Dichelobacter nodosus (strain VCS1703A).